A 622-amino-acid chain; its full sequence is Probable potassium transport system protein Kup 1 (622 aa).

12 consecutive transmembrane segments (helical) span residues Leu11–Val31, Ile50–Val70, Val101–Pro121, Pro137–Val157, Phe168–Ile188, Phe215–Leu235, Trp247–Leu267, Ala285–Ile305, Ile337–Phe357, Ala366–Ile386, Pro393–Ala413, and Leu419–Thr439.

The protein belongs to the HAK/KUP transporter (TC 2.A.72) family.

The protein localises to the cell inner membrane. It catalyses the reaction K(+)(in) + H(+)(in) = K(+)(out) + H(+)(out). In terms of biological role, transport of potassium into the cell. Likely operates as a K(+):H(+) symporter. The polypeptide is Probable potassium transport system protein Kup 1 (Albidiferax ferrireducens (strain ATCC BAA-621 / DSM 15236 / T118) (Rhodoferax ferrireducens)).